A 301-amino-acid chain; its full sequence is Putative S-adenosyl-L-methionine-dependent methyltransferase BCG_0775c (301 aa).

S-adenosyl-L-methionine is bound by residues Asp-130 and 159–160 (DL).

This sequence belongs to the UPF0677 family.

Exhibits S-adenosyl-L-methionine-dependent methyltransferase activity. In Mycobacterium bovis (strain BCG / Pasteur 1173P2), this protein is Putative S-adenosyl-L-methionine-dependent methyltransferase BCG_0775c.